Consider the following 487-residue polypeptide: Serralysin (487 aa).

Positions Met1–Ala16 are excised as a propeptide. His192 provides a ligand contact to Zn(2+). Glu193 is a catalytic residue. Residues His196, His202, and Tyr232 each coordinate Zn(2+). Ca(2+)-binding residues include Arg269, Gly271, Thr273, Asp301, Gly303, Gly304, Asp306, Thr343, Glu345, Gly350, Gly352, Asp354, Asn359, Ala361, Asn363, Gly367, Gly368, Ala369, Gly370, Asp372, Gly376, Gly377, Gly378, Gly379, Asp381, Gly385, Gly386, Ala387, Gly388, Asp390, Asp399, Asp406, and Asp416. Hemolysin-type calcium-binding repeat units follow at residues Ile348 to Leu365 and Lys366 to Leu383.

It belongs to the peptidase M10B family. Ca(2+) serves as cofactor. Zn(2+) is required as a cofactor.

The protein resides in the secreted. The enzyme catalyses Preferential cleavage of bonds with hydrophobic residues in P1'.. Has insecticidal activity against the locust M.palpalis. When administered orally to locusts at a low dose it causes them to lie on their sides exhibiting sporadic limb movements and muscular twitching, followed by full recovery. When administered at higher doses the same symptoms are observed, followed by death. The protein is Serralysin of Serratia marcescens.